A 208-amino-acid polypeptide reads, in one-letter code: MSLGKFVSFEGTEGVGKTTAINGLCERLQAQGIEYVRTREPGGSPFAEQLRELLLDTRTQINDDTELLLMFAARSDHLAQVIMPALSAGKWVICDRFIDSTVAYQGYGRGFGNADMLHKIEALIAGFVPRLPDITLWLDLPVAEGMQRAGKRSVADRFEQQQLDFFDRVYQGFEAQQQAQPQRIQRIDAQGEVEQVADRIWQSVSQQL.

11–18 lines the ATP pocket; it reads GTEGVGKT.

Belongs to the thymidylate kinase family.

The catalysed reaction is dTMP + ATP = dTDP + ADP. In terms of biological role, phosphorylation of dTMP to form dTDP in both de novo and salvage pathways of dTTP synthesis. This chain is Thymidylate kinase, found in Psychrobacter sp. (strain PRwf-1).